The following is a 319-amino-acid chain: L-lactate dehydrogenase 2 (319 aa).

NAD(+)-binding positions include V17, D38, K43, Y69, and 83-84 (GA). Substrate-binding residues include Q86 and R92. Residues S105, 122-124 (ATN), and S147 contribute to the NAD(+) site. Position 124 to 127 (124 to 127 (NPVD)) interacts with substrate. 152–155 (DSGR) is a substrate binding site. Beta-D-fructose 1,6-bisphosphate contacts are provided by R157 and H172. The Proton acceptor role is filled by H179. The residue at position 224 (Y224) is a Phosphotyrosine. T233 is a binding site for substrate.

This sequence belongs to the LDH/MDH superfamily. LDH family. As to quaternary structure, homotetramer.

It is found in the cytoplasm. It catalyses the reaction (S)-lactate + NAD(+) = pyruvate + NADH + H(+). It functions in the pathway fermentation; pyruvate fermentation to lactate; (S)-lactate from pyruvate: step 1/1. With respect to regulation, allosterically activated by fructose 1,6-bisphosphate (FBP). In terms of biological role, catalyzes the conversion of lactate to pyruvate. The chain is L-lactate dehydrogenase 2 from Peribacillus psychrosaccharolyticus (Bacillus psychrosaccharolyticus).